We begin with the raw amino-acid sequence, 422 residues long: MNIEKVIAREVLDSRGNPTVEAEVHLDSGFVGRAIVPSGASTGTHEALELRDGGSRYMGKGVQQAVRNVEEALGPAIVGLDASEQIAIDAALMAVDGTPNKGKMGGNAILAVSLATSRAAAEELGVPLYRYLGGSNAKTLPVPMMNLINGGAHADNSVDFQEFMVMPIGAPTFREALRYGTETFHSLKKVLSSRGYNTNVGDEGGFAPDLKSNEEALQVLLEAIEKAGYEPGKDIAIALDPAVTELYKDGHYDLESEGRTLSTAEMVDFWADWADRYPIVSIEDGLAEDDWDGWQALTTKIGDRVQLVGDDLFVTNPERLQRGIDTGVGNAILVKVNQIGSLTESMDAIELAKRHHYGTIISHRSGESEDSFIADLAVATNAGQIKTGSASRSDRIAKYNQLLRIEHALGDRAVYLGRKALR.

(2R)-2-phosphoglycerate is bound at residue Gln-161. Glu-203 acts as the Proton donor in catalysis. Residues Asp-240, Glu-283, and Asp-310 each coordinate Mg(2+). Positions 335, 364, 365, and 386 each coordinate (2R)-2-phosphoglycerate. Residue Lys-335 is the Proton acceptor of the active site.

The protein belongs to the enolase family. Mg(2+) serves as cofactor.

It is found in the cytoplasm. It localises to the secreted. The protein resides in the cell surface. It carries out the reaction (2R)-2-phosphoglycerate = phosphoenolpyruvate + H2O. It participates in carbohydrate degradation; glycolysis; pyruvate from D-glyceraldehyde 3-phosphate: step 4/5. Catalyzes the reversible conversion of 2-phosphoglycerate (2-PG) into phosphoenolpyruvate (PEP). It is essential for the degradation of carbohydrates via glycolysis. The chain is Enolase from Deinococcus deserti (strain DSM 17065 / CIP 109153 / LMG 22923 / VCD115).